The primary structure comprises 246 residues: 14-3-3 protein beta/alpha (246 aa).

Residue methionine 1 is modified to N-acetylmethionine. Threonine 2 carries the N-acetylthreonine; in 14-3-3 protein beta/alpha, N-terminally processed modification. Threonine 2 carries the post-translational modification Phosphothreonine. An N6-acetyllysine modification is found at lysine 5. The residue at position 51 (lysine 51) is an N6-acetyllysine; alternate. Lysine 51 is covalently cross-linked (Glycyl lysine isopeptide (Lys-Gly) (interchain with G-Cter in SUMO2); alternate). At serine 60 the chain carries Phosphoserine. Lysine 70 bears the N6-acetyllysine mark. Residues tyrosine 84 and tyrosine 106 each carry the 3'-nitrotyrosine modification. Lysine 117 is subject to N6-acetyllysine. Residues serine 186 and serine 232 each carry the phosphoserine modification.

Belongs to the 14-3-3 family. Homodimer. Interacts with SAMSN1 and PRKCE. Interacts with AKAP13. Interacts with SSH1 and TORC2/CRTC2. Interacts with ABL1; the interaction results in cytoplasmic location of ABL1 and inhibition of cABL-mediated apoptosis. Interacts with ROR2 (dimer); the interaction results in phosphorylation of YWHAB on tyrosine residues. Interacts with GAB2. Interacts with YAP1 (phosphorylated form). Interacts with the phosphorylated (by AKT1) form of SRPK2. Interacts with PKA-phosphorylated AANAT. Interacts with MYO1C. Interacts with SIRT2. Interacts with the 'Thr-369' phosphorylated form of DAPK2. Interacts with PI4KB, TBC1D22A and TBC1D22B. Interacts with the 'Ser-1134' and 'Ser-1161' phosphorylated form of SOS1. Interacts (via phosphorylated form) with YWHAB; this interaction occurs in a protein kinase AKT1-dependent manner. Interacts with SLITRK1. Interacts with SYNPO2 (phosphorylated form); YWHAB competes with ACTN2 for interaction with SYNPO2. Interacts with RIPOR2 (via phosphorylated form); this interaction occurs in a chemokine-dependent manner and does not compete for binding of RIPOR2 with RHOA nor blocks inhibition of RIPOR2-mediated RHOA activity. Interacts with MARK2 and MARK3. Interacts with TESK1; the interaction is dependent on the phosphorylation of TESK1 'Ser-439' and inhibits TESK1 kinase activity. Interacts with MEFV. Interacts with HDAC4. Interacts with ADAM22 (via C-terminus). Isoform alpha differs from isoform beta in being phosphorylated. Phosphorylated on Ser-60 by protein kinase C delta type catalytic subunit in a sphingosine-dependent fashion. Post-translationally, isoform Short contains a N-acetylmethionine at position 1.

The protein resides in the cytoplasm. It localises to the melanosome. Functionally, adapter protein implicated in the regulation of a large spectrum of both general and specialized signaling pathways. Binds to a large number of partners, usually by recognition of a phosphoserine or phosphothreonine motif. Binding generally results in the modulation of the activity of the binding partner. Negative regulator of osteogenesis. Blocks the nuclear translocation of the phosphorylated form (by AKT1) of SRPK2 and antagonizes its stimulatory effect on cyclin D1 expression resulting in blockage of neuronal apoptosis elicited by SRPK2. Negative regulator of signaling cascades that mediate activation of MAP kinases via AKAP13. This is 14-3-3 protein beta/alpha (Ywhab) from Mus musculus (Mouse).